The following is a 358-amino-acid chain: Fructose-bisphosphate aldolase class 2 (358 aa).

Ser61 lines the D-glyceraldehyde 3-phosphate pocket. The active-site Proton donor is the Asp109. Residues His110, Asp144, Glu174, and His226 each coordinate Zn(2+). Residue Gly227 coordinates dihydroxyacetone phosphate. Residue His264 coordinates Zn(2+). Residues 265-267 and 286-289 contribute to the dihydroxyacetone phosphate site; these read GGS and NIDT.

This sequence belongs to the class II fructose-bisphosphate aldolase family. Zn(2+) is required as a cofactor.

The enzyme catalyses beta-D-fructose 1,6-bisphosphate = D-glyceraldehyde 3-phosphate + dihydroxyacetone phosphate. It participates in carbohydrate degradation; glycolysis; D-glyceraldehyde 3-phosphate and glycerone phosphate from D-glucose: step 4/4. In terms of biological role, catalyzes the aldol condensation of dihydroxyacetone phosphate (DHAP or glycerone-phosphate) with glyceraldehyde 3-phosphate (G3P) to form fructose 1,6-bisphosphate (FBP) in gluconeogenesis and the reverse reaction in glycolysis. In Buchnera aphidicola subsp. Acyrthosiphon pisum (strain APS) (Acyrthosiphon pisum symbiotic bacterium), this protein is Fructose-bisphosphate aldolase class 2 (fbaA).